We begin with the raw amino-acid sequence, 829 residues long: DNA ligase (829 aa).

NAD(+)-binding positions include 38–42 (DAEYD), 87–88 (SL), and Glu-127. The N6-AMP-lysine intermediate role is filled by Lys-129. Arg-150, Glu-187, Lys-305, and Lys-329 together coordinate NAD(+). The Zn(2+) site is built by Cys-455, Cys-458, Cys-473, and Cys-479. The tract at residues 534-564 (ETADKGSSENENGDAETVSGDLSKYNTQNGK) is disordered. A BRCT domain is found at 752-829 (GINKAVAGKT…SEAELLTLLC (78 aa)).

The protein belongs to the NAD-dependent DNA ligase family. LigA subfamily. The cofactor is Mg(2+). Requires Mn(2+) as cofactor.

The catalysed reaction is NAD(+) + (deoxyribonucleotide)n-3'-hydroxyl + 5'-phospho-(deoxyribonucleotide)m = (deoxyribonucleotide)n+m + AMP + beta-nicotinamide D-nucleotide.. DNA ligase that catalyzes the formation of phosphodiester linkages between 5'-phosphoryl and 3'-hydroxyl groups in double-stranded DNA using NAD as a coenzyme and as the energy source for the reaction. It is essential for DNA replication and repair of damaged DNA. The chain is DNA ligase from Neisseria gonorrhoeae (strain ATCC 700825 / FA 1090).